We begin with the raw amino-acid sequence, 630 residues long: Protein phosphatase 2C-like domain-containing protein 1 (630 aa).

A PPM-type phosphatase domain is found at 170–621 (GVGICEDRNS…DNITVMVIFL (452 aa)). A compositionally biased stretch (basic and acidic residues) spans 557-569 (TTHRKPCSEKVTD). The segment at 557–578 (TTHRKPCSEKVTDRPTSVNDVA) is disordered.

Belongs to the PP2C family.

The polypeptide is Protein phosphatase 2C-like domain-containing protein 1 (PP2D1) (Homo sapiens (Human)).